Reading from the N-terminus, the 79-residue chain is Small ribosomal subunit protein bS18 (79 aa).

The protein belongs to the bacterial ribosomal protein bS18 family. In terms of assembly, part of the 30S ribosomal subunit. Forms a tight heterodimer with protein bS6.

Functionally, binds as a heterodimer with protein bS6 to the central domain of the 16S rRNA, where it helps stabilize the platform of the 30S subunit. This Rhodopseudomonas palustris (strain BisB18) protein is Small ribosomal subunit protein bS18.